We begin with the raw amino-acid sequence, 358 residues long: Histidinol-phosphate aminotransferase (358 aa).

The residue at position 217 (Lys217) is an N6-(pyridoxal phosphate)lysine.

This sequence belongs to the class-II pyridoxal-phosphate-dependent aminotransferase family. Histidinol-phosphate aminotransferase subfamily. Homodimer. The cofactor is pyridoxal 5'-phosphate.

It catalyses the reaction L-histidinol phosphate + 2-oxoglutarate = 3-(imidazol-4-yl)-2-oxopropyl phosphate + L-glutamate. It functions in the pathway amino-acid biosynthesis; L-histidine biosynthesis; L-histidine from 5-phospho-alpha-D-ribose 1-diphosphate: step 7/9. This Ruminiclostridium cellulolyticum (strain ATCC 35319 / DSM 5812 / JCM 6584 / H10) (Clostridium cellulolyticum) protein is Histidinol-phosphate aminotransferase.